The primary structure comprises 255 residues: Acetylglutamate kinase (255 aa).

Residues 40–41 (GG), Arg62, and Asn153 contribute to the substrate site.

The protein belongs to the acetylglutamate kinase family. ArgB subfamily.

It localises to the cytoplasm. It carries out the reaction N-acetyl-L-glutamate + ATP = N-acetyl-L-glutamyl 5-phosphate + ADP. The protein operates within amino-acid biosynthesis; L-arginine biosynthesis; N(2)-acetyl-L-ornithine from L-glutamate: step 2/4. In terms of biological role, catalyzes the ATP-dependent phosphorylation of N-acetyl-L-glutamate. The sequence is that of Acetylglutamate kinase from Bacillus cereus (strain G9842).